The primary structure comprises 310 residues: Homoserine kinase (310 aa).

91–101 (PIGSGLGSSAC) is a binding site for ATP.

It belongs to the GHMP kinase family. Homoserine kinase subfamily.

The protein localises to the cytoplasm. The enzyme catalyses L-homoserine + ATP = O-phospho-L-homoserine + ADP + H(+). The protein operates within amino-acid biosynthesis; L-threonine biosynthesis; L-threonine from L-aspartate: step 4/5. Catalyzes the ATP-dependent phosphorylation of L-homoserine to L-homoserine phosphate. This is Homoserine kinase from Escherichia coli O139:H28 (strain E24377A / ETEC).